The following is a 144-amino-acid chain: Nucleoside diphosphate kinase (144 aa).

ATP-binding residues include Lys-11, Phe-59, Arg-87, Thr-93, Arg-104, and Asn-114. His-117 functions as the Pros-phosphohistidine intermediate in the catalytic mechanism.

Belongs to the NDK family. As to quaternary structure, homotetramer. The cofactor is Mg(2+).

It localises to the cytoplasm. It carries out the reaction a 2'-deoxyribonucleoside 5'-diphosphate + ATP = a 2'-deoxyribonucleoside 5'-triphosphate + ADP. The enzyme catalyses a ribonucleoside 5'-diphosphate + ATP = a ribonucleoside 5'-triphosphate + ADP. Functionally, major role in the synthesis of nucleoside triphosphates other than ATP. The ATP gamma phosphate is transferred to the NDP beta phosphate via a ping-pong mechanism, using a phosphorylated active-site intermediate. This is Nucleoside diphosphate kinase from Aliivibrio fischeri (strain MJ11) (Vibrio fischeri).